Reading from the N-terminus, the 72-residue chain is Small ribosomal subunit protein bS18 (72 aa).

This sequence belongs to the bacterial ribosomal protein bS18 family. Part of the 30S ribosomal subunit. Forms a tight heterodimer with protein bS6.

In terms of biological role, binds as a heterodimer with protein bS6 to the central domain of the 16S rRNA, where it helps stabilize the platform of the 30S subunit. The chain is Small ribosomal subunit protein bS18 from Francisella philomiragia subsp. philomiragia (strain ATCC 25017 / CCUG 19701 / FSC 153 / O#319-036).